Here is a 179-residue protein sequence, read N- to C-terminus: Large ribosomal subunit protein uL5 (179 aa).

This sequence belongs to the universal ribosomal protein uL5 family. In terms of assembly, part of the 50S ribosomal subunit; part of the 5S rRNA/L5/L18/L25 subcomplex. Contacts the 5S rRNA and the P site tRNA. Forms a bridge to the 30S subunit in the 70S ribosome.

This is one of the proteins that bind and probably mediate the attachment of the 5S RNA into the large ribosomal subunit, where it forms part of the central protuberance. In the 70S ribosome it contacts protein S13 of the 30S subunit (bridge B1b), connecting the 2 subunits; this bridge is implicated in subunit movement. Contacts the P site tRNA; the 5S rRNA and some of its associated proteins might help stabilize positioning of ribosome-bound tRNAs. The protein is Large ribosomal subunit protein uL5 of Hamiltonella defensa subsp. Acyrthosiphon pisum (strain 5AT).